Here is a 207-residue protein sequence, read N- to C-terminus: Oligoribonuclease (207 aa).

One can recognise an Exonuclease domain in the interval leucine 8–leucine 172. Tyrosine 129 is an active-site residue.

This sequence belongs to the oligoribonuclease family.

The protein localises to the cytoplasm. In terms of biological role, 3'-to-5' exoribonuclease specific for small oligoribonucleotides. The sequence is that of Oligoribonuclease from Leifsonia xyli subsp. xyli (strain CTCB07).